A 362-amino-acid polypeptide reads, in one-letter code: Putative G-protein coupled receptor B0244.5 (362 aa).

The Extracellular segment spans residues 1–47 (MQNIFENCSYHSKYEPYFLNCTNTTNQCVLIQDVGIIQAIDFWANLC). Residues asparagine 7, asparagine 20, and asparagine 23 are each glycosylated (N-linked (GlcNAc...) asparagine). The chain crosses the membrane as a helical span at residues 48–68 (IPFTLFVIAFILNGYYLSILI). At 69 to 81 (PEFRKMNDTTKKQ) the chain is on the cytoplasmic side. Residues 82–102 (YIFVVSRGISSLSASSIMMVL) form a helical membrane-spanning segment. Topologically, residues 103–125 (RLLKMLSTSFTVYFLFFLIDDLS) are extracellular. A helical transmembrane segment spans residues 126-145 (FYSLLGSYVGSTLLLYLATV). Residues 146-161 (RPIFYSIQISVRIVYK) are Cytoplasmic-facing. A helical membrane pass occupies residues 162–182 (FALVNVLLAVVLAVTTAIFQA). The Extracellular portion of the chain corresponds to 183–204 (AEVSDGFFHCDVQHCQPIINIA). The chain crosses the membrane as a helical span at residues 205–225 (MFVIIATSFLIPIITLTFVLV). Topologically, residues 226–255 (TLCFQKSRTQSIGNFTVDNSVYKSARTRLA) are cytoplasmic. A helical membrane pass occupies residues 256–276 (WTLFTFTLISLTEMIPSSFLV). At 277 to 295 (NLRVEDTITICVNFYQADH) the chain is on the extracellular side. A helical membrane pass occupies residues 296-316 (LFIPAIMNSFQTLAWGIALIV). Residues 317 to 362 (DPLCALLFDPRIRKVWVEHVSRLSIIIGRSFEACCHSNLNKEIQDK) are Cytoplasmic-facing.

Belongs to the G-protein coupled receptor 1 family. B0244 subfamily.

It is found in the cell membrane. The protein is Putative G-protein coupled receptor B0244.5 of Caenorhabditis elegans.